The following is a 436-amino-acid chain: MQVSVENTSALERRMTIGVPAERIETEVNKRLQQTARKAKIPGFRPGKVPMSVIRQRYEDGARQEALGDLIQATFYEAVVEQKLNPAGAPAVEPKSFEKGKDLEYVATFEVFPEFTVAGFDSISVERLSADVADSDLDNMLEVLRKQNVRFEVTDRAAQNEDQLNIDFVGKVDGEVFAGGSATGTQLVLGSGRMIPGFEDGLVGAKAGEERVLNVTFPEDYQNLELAGKAAEFTVTVNTVSEPKLPELNEEFFKQFGIKETGIEGFRTEVRKNMERELRQAIKSKVKNQVMDGLLAANPIEVPKALLENEVNRLRVQAVQQFGGNIKPDQLPAELFEEQAKRRVELGLIVAEVVKQFDLKPDDARVREMIQEMASAYQEPEQVVAWYYKNEQQMNEVRSVVLEEQVVDTVLQKASVTDKSVSYEEAVKPVEAPKAD.

Positions 161–246 (EDQLNIDFVG…VNTVSEPKLP (86 aa)) constitute a PPIase FKBP-type domain.

It belongs to the FKBP-type PPIase family. Tig subfamily.

Its subcellular location is the cytoplasm. The enzyme catalyses [protein]-peptidylproline (omega=180) = [protein]-peptidylproline (omega=0). Involved in protein export. Acts as a chaperone by maintaining the newly synthesized protein in an open conformation. Functions as a peptidyl-prolyl cis-trans isomerase. This Pseudomonas syringae pv. syringae (strain B728a) protein is Trigger factor.